A 329-amino-acid chain; its full sequence is Beta-ketoacyl-[acyl-carrier-protein] synthase III (329 aa).

Active-site residues include Cys123 and His256. Residues 257–261 (QANIR) form an ACP-binding region. Asn286 is an active-site residue.

Belongs to the thiolase-like superfamily. FabH family. As to quaternary structure, homodimer.

Its subcellular location is the cytoplasm. It carries out the reaction malonyl-[ACP] + acetyl-CoA + H(+) = 3-oxobutanoyl-[ACP] + CO2 + CoA. The protein operates within lipid metabolism; fatty acid biosynthesis. Its function is as follows. Catalyzes the condensation reaction of fatty acid synthesis by the addition to an acyl acceptor of two carbons from malonyl-ACP. Catalyzes the first condensation reaction which initiates fatty acid synthesis and may therefore play a role in governing the total rate of fatty acid production. Possesses both acetoacetyl-ACP synthase and acetyl transacylase activities. Its substrate specificity determines the biosynthesis of branched-chain and/or straight-chain of fatty acids. The sequence is that of Beta-ketoacyl-[acyl-carrier-protein] synthase III from Burkholderia lata (strain ATCC 17760 / DSM 23089 / LMG 22485 / NCIMB 9086 / R18194 / 383).